A 795-amino-acid polypeptide reads, in one-letter code: Phenylalanine--tRNA ligase beta subunit (795 aa).

Residues 39–148 form the tRNA-binding domain; that stretch reads AGVFDGVKVG…ENAPIGMDFR (110 aa). The B5 domain occupies 401-476; the sequence is PKPNQVALRR…RIYGYNNIPN (76 aa). The Mg(2+) site is built by D454, D460, E463, and E464. Residues 701 to 794 form the FDX-ACB domain; the sequence is SKFPANRRDI…VSAQFGAALR (94 aa).

Belongs to the phenylalanyl-tRNA synthetase beta subunit family. Type 1 subfamily. In terms of assembly, tetramer of two alpha and two beta subunits. The cofactor is Mg(2+).

The protein localises to the cytoplasm. It carries out the reaction tRNA(Phe) + L-phenylalanine + ATP = L-phenylalanyl-tRNA(Phe) + AMP + diphosphate + H(+). The sequence is that of Phenylalanine--tRNA ligase beta subunit (pheT) from Vibrio cholerae serotype O1 (strain ATCC 39315 / El Tor Inaba N16961).